The sequence spans 521 residues: Ribonuclease Y (521 aa).

The helical transmembrane segment at 1–21 threads the bilayer; sequence MFFIEHPFVYLGLDLIVGCLI. Residues 211 to 271 enclose the KH domain; sequence TVSMVPLPSD…VRREVARLAL (61 aa). Residues 337–430 enclose the HD domain; that stretch reads VLQHSLEVAF…VQAADALSGA (94 aa).

Belongs to the RNase Y family.

The protein resides in the cell membrane. Its function is as follows. Endoribonuclease that initiates mRNA decay. The chain is Ribonuclease Y from Desulfotalea psychrophila (strain LSv54 / DSM 12343).